The chain runs to 153 residues: Putative pre-16S rRNA nuclease (153 aa).

This sequence belongs to the YqgF nuclease family.

The protein localises to the cytoplasm. In terms of biological role, could be a nuclease involved in processing of the 5'-end of pre-16S rRNA. In Koribacter versatilis (strain Ellin345), this protein is Putative pre-16S rRNA nuclease.